The chain runs to 1038 residues: Fibronectin-binding protein A (1038 aa).

The first 36 residues, 1–36 (MKNNLRYGIRKHKLGAASVFLGTMIVVGMGQDKEAA), serve as a signal peptide directing secretion. Positions 7–18 (YGIRKHKLGAAS) match the YSIRK-G/S signaling motif motif. The segment at 37–193 (ASEQKTTTVE…VSEVKGTDVT (157 aa)) is disordered. The tract at residues 37–507 (ASEQKTTTVE…SNKADGNGKN (471 aa)) is ligand-binding A region. Residues 39 to 92 (EQKTTTVEENGNSATDNKTSETQTTATNVNHIEETQSYNATVTEQPSNATQVTT) show a composition bias toward polar residues. Residues 112–121 (TVKEEEKPQV) show a composition bias toward basic and acidic residues. Over residues 122-164 (KETTQPQDNSGNQRQVDLTPKKVTQNQGTETQVEVAQPRTASE) the composition is skewed to polar residues. A compositionally biased stretch (basic and acidic residues) spans 174–189 (DVAEAKEASDVSEVKG). Positions 189-507 (GTDVTSKVTV…SNKADGNGKN (319 aa)) are fibrinogen/elastin/tropoelastin-binding. The tract at residues 508-868 (GQIIQDNDFE…EGQQTIEEDT (361 aa)) is fibronectin-binding. One copy of the B-1 repeat lies at 541 to 570 (ENQDNTPLDIDYHTAIDGEGGYVDGYIETI). A 2 X approximate tandem repeats region spans residues 541–600 (ENQDNTPLDIDYHTAIDGEGGYVDGYIETIEETDSSAIDIDYHTAVDSEVGHVGGYTESS). The stretch at 571–600 (EETDSSAIDIDYHTAVDSEVGHVGGYTESS) is one B-2 repeat. 3 disordered regions span residues 736-804 (LGYE…GGNI), 825-976 (IEED…GKVV), and 989-1015 (VAPT…NKGM). The stretch at 741–778 (GQNSGNQSFEEDTEEDKPKYEQGGNIVDIDFDSVPQIH) is one D-1 repeat. The interval 741–898 (GQNSGNQSFE…TPEVPSEPET (158 aa)) is 4 X approximate tandem repeats. A D-2 repeat occupies 779–816 (GQNKGDQSFEEDTEKDKPKYEHGGNIIDIDFDSVPQIH). The D-3 repeat unit spans residues 817–855 (GFNKHNEIIEEDTNKDKPNYQFGGHNSVDFEEDTLPKVS). Positions 825-834 (IEEDTNKDKP) are enriched in basic and acidic residues. One copy of the D-4 repeat lies at 856–898 (GQNEGQQTIEEDTTPPTPPTPEVPSEPETPMPPTPEVPSEPET). A compositionally biased stretch (pro residues) spans 870–958 (PPTPPTPEVP…PAEPGKPVPP (89 aa)). WR repeat units follow at residues 899–912 (PTPP…EPET), 913–926 (PTPP…EPET), 927–940 (PTPP…EPET), 941–954 (PTPP…EPGK), and 955–968 (PVPP…KPSK). Positions 899–968 (PTPPTPEVPS…AKEEPKKPSK (70 aa)) are 5 X tandem repeats, Pro-rich (WR). Residues 1002–1006 (LPETG) carry the LPXTG sorting signal motif. The residue at position 1005 (Thr1005) is a Pentaglycyl murein peptidoglycan amidated threonine. Positions 1006–1038 (GGEESTNKGMLFGGLFSILGLALLRRNKKNNKA) are cleaved as a propeptide — removed by sortase.

It localises to the secreted. The protein resides in the cell wall. In terms of biological role, promotes bacterial attachment to multiple substrates, such as fibronectin (Fn), fibrinogen (Fg), elastin peptides and tropoelastin. This confers to S.aureus the ability to invade endothelial cells. Promotes adherence to and aggregation of activated platelets. This is Fibronectin-binding protein A (fnbA) from Staphylococcus aureus (strain Mu50 / ATCC 700699).